The primary structure comprises 220 residues: Sugar transporter SWEET1 (220 aa).

The next 7 helical transmembrane spans lie at 9-29 (LMTF…IMPL), 44-64 (VAGL…SYAL), 70-90 (TMLF…FNYW), 106-126 (VMIA…NTVD), 138-158 (LSSV…AIVI), 167-187 (IINV…FGLL), and 191-211 (IYIY…LTLI). The MtN3/slv 1 domain occupies 12–92 (FIQFCATFIT…IYYVFNYWKN (81 aa)). The region spanning 134–217 (RLGFLSSVVC…LTLIKLYPPQ (84 aa)) is the MtN3/slv 2 domain.

The protein belongs to the SWEET sugar transporter family.

The protein localises to the golgi apparatus membrane. The protein resides in the cell membrane. In terms of biological role, mediates both low-affinity uptake and efflux of sugar across the membrane. The protein is Sugar transporter SWEET1 (slc50a1) of Dictyostelium discoideum (Social amoeba).